A 779-amino-acid polypeptide reads, in one-letter code: Nucleus-vacuole junction protein 2 (779 aa).

The Cytoplasmic segment spans residues 1–2; that stretch reads MF. A helical; Signal-anchor for type II membrane protein membrane pass occupies residues 3-23; that stretch reads FAFLITYLLGGVTFLPFILFI. Residues 24 to 779 lie on the Lumenal side of the membrane; sequence YLLTRPTHKS…VRPVPPIPKL (756 aa). A glycan (N-linked (GlcNAc...) asparagine) is linked at Asn-233. An SMP-LTD domain is found at 238 to 429; that stretch reads SSPDTDWLNA…MPNMNDLAFF (192 aa). Over residues 454 to 465 the composition is skewed to basic and acidic residues; sequence PAEKDAKAERKK. Disordered stretches follow at residues 454 to 539 and 573 to 592; these read PAEK…NKSS and LKTK…QTTL. Ser-473 is subject to Phosphoserine. Over residues 484 to 494 the composition is skewed to polar residues; it reads RSSNSNDTAPS. N-linked (GlcNAc...) asparagine glycans are attached at residues Asn-489 and Asn-536. 2 N-linked (GlcNAc...) asparagine glycosylation sites follow: Asn-640 and Asn-660. A disordered region spans residues 654–779; that stretch reads QNAIDFNVTN…VRPVPPIPKL (126 aa). Polar residues predominate over residues 660–674; it reads NVTNTHSPSRSISSE. The segment covering 675–691 has biased composition (basic and acidic residues); that stretch reads KSYKAAERGQQDKHNDV. The span at 733–750 shows a compositional bias: polar residues; the sequence is GQPTLHPQGQLPIQNVEQ.

It localises to the endoplasmic reticulum membrane. The protein resides in the nucleus membrane. In terms of biological role, during endoplasmic reticulum (ER) stress or when cellular ceramide levels increase, induces contacts between the ER and medial-Golgi complex to facilitate non-vesicular transport of ceramides from the ER to the Golgi complex where they are converted to complex sphingolipids, preventing toxic ceramide accumulation. The sequence is that of Nucleus-vacuole junction protein 2 (nvj2) from Schizosaccharomyces pombe (strain 972 / ATCC 24843) (Fission yeast).